The sequence spans 101 residues: NADH-quinone oxidoreductase subunit K (101 aa).

3 consecutive transmembrane segments (helical) span residues 5-25 (LTHY…GIIL), 30-50 (IVIL…LVAF), and 61-81 (VLVF…LALI).

Belongs to the complex I subunit 4L family. NDH-1 is composed of 14 different subunits. Subunits NuoA, H, J, K, L, M, N constitute the membrane sector of the complex.

The protein resides in the cell inner membrane. The catalysed reaction is a quinone + NADH + 5 H(+)(in) = a quinol + NAD(+) + 4 H(+)(out). In terms of biological role, NDH-1 shuttles electrons from NADH, via FMN and iron-sulfur (Fe-S) centers, to quinones in the respiratory chain. The immediate electron acceptor for the enzyme in this species is believed to be ubiquinone. Couples the redox reaction to proton translocation (for every two electrons transferred, four hydrogen ions are translocated across the cytoplasmic membrane), and thus conserves the redox energy in a proton gradient. In Methylacidiphilum infernorum (isolate V4) (Methylokorus infernorum (strain V4)), this protein is NADH-quinone oxidoreductase subunit K.